Reading from the N-terminus, the 22-residue chain is Brevinin-1OKc (22 aa).

Lysine 22 carries the post-translational modification Lysine amide.

Expressed by the skin glands.

The protein resides in the secreted. In terms of biological role, antimicrobial peptide. Active against Gram-negative bacterium E.coli (MIC=6 uM) and against Gram-positive bacterium S.aureus (MIC=12.5 uM). The protein is Brevinin-1OKc of Nidirana okinavana (Kampira Falls frog).